A 252-amino-acid chain; its full sequence is Triosephosphate isomerase (252 aa).

9–11 (NWK) is a substrate binding site. His95 serves as the catalytic Electrophile. The Proton acceptor role is filled by Glu167. Substrate is bound by residues Gly173, Ser213, and 234-235 (GG). Ser213 is modified (phosphoserine).

It belongs to the triosephosphate isomerase family. Homodimer.

The protein resides in the cytoplasm. It carries out the reaction D-glyceraldehyde 3-phosphate = dihydroxyacetone phosphate. It functions in the pathway carbohydrate biosynthesis; gluconeogenesis. It participates in carbohydrate degradation; glycolysis; D-glyceraldehyde 3-phosphate from glycerone phosphate: step 1/1. Its function is as follows. Involved in the gluconeogenesis. Catalyzes stereospecifically the conversion of dihydroxyacetone phosphate (DHAP) to D-glyceraldehyde-3-phosphate (G3P). This Oceanobacillus iheyensis (strain DSM 14371 / CIP 107618 / JCM 11309 / KCTC 3954 / HTE831) protein is Triosephosphate isomerase.